Reading from the N-terminus, the 124-residue chain is Small ribosomal subunit protein uS13 (124 aa).

The interval 98-124 (VRGQRTRCNARTRKGPRKTVGAKRKEK) is disordered.

The protein belongs to the universal ribosomal protein uS13 family. In terms of assembly, part of the 30S ribosomal subunit. Forms a loose heterodimer with protein S19. Forms two bridges to the 50S subunit in the 70S ribosome.

In terms of biological role, located at the top of the head of the 30S subunit, it contacts several helices of the 16S rRNA. In the 70S ribosome it contacts the 23S rRNA (bridge B1a) and protein L5 of the 50S subunit (bridge B1b), connecting the 2 subunits; these bridges are implicated in subunit movement. Contacts the tRNAs in the A and P-sites. This chain is Small ribosomal subunit protein uS13, found in Dictyoglomus turgidum (strain DSM 6724 / Z-1310).